Reading from the N-terminus, the 282-residue chain is MRHGTLRVDVVTIFPEYLEPLNVSLVGKARARGQLNVHVHDLREWTYDRHNTVDDTPYGGGPGMVMKTEPWGDALDSVLADGYETDAHGPALIVPTPSGRPFTQELAVELSERPWLVFTPARYEGIDRRVIDEYATRMPVYEVSIGDYVLAGGEAAVLVITEAVARLLPGVLGNAESHRDDSFAPGAMANLLEGPVYTKPPAWRDREIPEVLLSGHHGRIARWRRDEALKRTTANRPDLIERCDPSAFDKKDREMLSILGWFPDPDGVPHGRFWRRPEAMEE.

145-150 contributes to the S-adenosyl-L-methionine binding site; the sequence is IGDYVL.

It belongs to the RNA methyltransferase TrmD family. As to quaternary structure, homodimer.

The protein resides in the cytoplasm. It carries out the reaction guanosine(37) in tRNA + S-adenosyl-L-methionine = N(1)-methylguanosine(37) in tRNA + S-adenosyl-L-homocysteine + H(+). Its function is as follows. Specifically methylates guanosine-37 in various tRNAs. This chain is tRNA (guanine-N(1)-)-methyltransferase, found in Streptomyces avermitilis (strain ATCC 31267 / DSM 46492 / JCM 5070 / NBRC 14893 / NCIMB 12804 / NRRL 8165 / MA-4680).